The chain runs to 880 residues: Translation initiation factor IF-2 (880 aa).

Disordered regions lie at residues 51 to 78 (KQHG…GSTG), 93 to 116 (YVKR…QAAN), and 142 to 293 (KEAD…FEKP). The segment covering 69 to 78 (STLNVKGSTG) has biased composition (polar residues). A compositionally biased stretch (basic and acidic residues) spans 142-229 (KEADEKAKKA…ARKKAAEGGD (88 aa)). The segment covering 269-279 (GRRTRRGKKQR) has biased composition (basic residues). In terms of domain architecture, tr-type G spans 380–549 (SRAPVVTIMG…LLQAEMLDLS (170 aa)). The segment at 389 to 396 (GHVDHGKT) is G1. 389 to 396 (GHVDHGKT) is a binding site for GTP. Positions 414 to 418 (GITQH) are G2. The tract at residues 435–438 (DTPG) is G3. Residues 435–439 (DTPGH) and 489–492 (NKID) each bind GTP. The segment at 489–492 (NKID) is G4. A G5 region spans residues 525–527 (SAK).

The protein belongs to the TRAFAC class translation factor GTPase superfamily. Classic translation factor GTPase family. IF-2 subfamily.

Its subcellular location is the cytoplasm. Its function is as follows. One of the essential components for the initiation of protein synthesis. Protects formylmethionyl-tRNA from spontaneous hydrolysis and promotes its binding to the 30S ribosomal subunits. Also involved in the hydrolysis of GTP during the formation of the 70S ribosomal complex. The protein is Translation initiation factor IF-2 of Psychromonas ingrahamii (strain DSM 17664 / CCUG 51855 / 37).